Here is a 361-residue protein sequence, read N- to C-terminus: Trans-2,3-enoyl-CoA reductase-like (361 aa).

Ser33 and Ser35 each carry phosphoserine. Transmembrane regions (helical) follow at residues 139–159 (VGWT…YLLF), 181–201 (VHLA…ETLF), 215–235 (LIKG…YINH), and 309–329 (ISFT…LMTI).

Belongs to the steroid 5-alpha reductase family. As to expression, expression is highest in the heart with very low to almost undetectable levels in brain, skeletal muscle, stomach, pancreas, liver, kidney, small intestine, and uterus.

It localises to the membrane. The protein localises to the endoplasmic reticulum. This Mus musculus (Mouse) protein is Trans-2,3-enoyl-CoA reductase-like (Tecrl).